A 370-amino-acid polypeptide reads, in one-letter code: Putative replication factor C small subunit L478 (370 aa).

41 to 48 (GPSGSGKK) contacts ATP. Over residues 342–353 (RNKEPEKSEKTK) the composition is skewed to basic and acidic residues. Residues 342–370 (RNKEPEKSEKTKSKTGKLSRTNSKKTIKN) form a disordered region. Over residues 354 to 370 (SKTGKLSRTNSKKTIKN) the composition is skewed to basic residues.

This sequence belongs to the activator 1 small subunits family. RfcS subfamily.

Functionally, part of the RFC clamp loader complex which loads the PCNA sliding clamp onto DNA. In Acanthamoeba polyphaga (Amoeba), this protein is Putative replication factor C small subunit L478.